The following is a 325-amino-acid chain: MHPKIFALLAKFPRVELIPWETPIQYLPNISREIGADVYIKRDDLTGLGIGGNKIRKLEYLLGDALSKGADVVITVGAVHSNHAFVTGLAAKKLGLDAILVLRGKEELKGNYLLDKIMGIETRVYDAKDSFELMKYAEEIAEELKREGRKPYVIPPGGASPIGTLGYVRAVGEIATQSEVKFDSIVVAAGSGGTLAGLSLGLSILNEDIRPVGIAVGRFGEVMTSKLDNLIKEAAELLGVKVEVRPELYDYSFGEYGKITGEVAQIIRKVGTREGIILDPVYTGKAFYGLVDLARKGELGEKILFIHTGGISGTFHYGDKLLSLL.

Lys54 carries the N6-(pyridoxal phosphate)lysine modification.

The protein belongs to the ACC deaminase/D-cysteine desulfhydrase family. The cofactor is pyridoxal 5'-phosphate.

The enzyme catalyses 1-aminocyclopropane-1-carboxylate + H2O = 2-oxobutanoate + NH4(+). This is Putative 1-aminocyclopropane-1-carboxylate deaminase from Pyrococcus horikoshii (strain ATCC 700860 / DSM 12428 / JCM 9974 / NBRC 100139 / OT-3).